A 485-amino-acid chain; its full sequence is N-succinylglutamate 5-semialdehyde dehydrogenase 2 (485 aa).

Residue 221–226 (GSAAAG) participates in NAD(+) binding. Active-site residues include Glu-244 and Cys-279.

This sequence belongs to the aldehyde dehydrogenase family. AstD subfamily.

The catalysed reaction is N-succinyl-L-glutamate 5-semialdehyde + NAD(+) + H2O = N-succinyl-L-glutamate + NADH + 2 H(+). The protein operates within amino-acid degradation; L-arginine degradation via AST pathway; L-glutamate and succinate from L-arginine: step 4/5. Its function is as follows. Catalyzes the NAD-dependent reduction of succinylglutamate semialdehyde into succinylglutamate. This Caulobacter vibrioides (strain ATCC 19089 / CIP 103742 / CB 15) (Caulobacter crescentus) protein is N-succinylglutamate 5-semialdehyde dehydrogenase 2.